We begin with the raw amino-acid sequence, 214 residues long: Mexicain (214 aa).

3 disulfides stabilise this stretch: Cys22/Cys63, Cys56/Cys95, and Cys153/Cys200. Cys25 is an active-site residue. E64 is bound at residue Cys25. Catalysis depends on residues His159 and Asn175.

The protein belongs to the peptidase C1 family. In terms of tissue distribution, expressed in latex.

The protein resides in the secreted. Cysteine protease. The sequence is that of Mexicain from Jacaratia mexicana (Wild papaya).